A 62-amino-acid polypeptide reads, in one-letter code: Photosystem II reaction center protein Z (62 aa).

2 helical membrane-spanning segments follow: residues 8-28 and 41-61; these read AVFA…VVFA and FSGT…NSLI.

It belongs to the PsbZ family. In terms of assembly, PSII is composed of 1 copy each of membrane proteins PsbA, PsbB, PsbC, PsbD, PsbE, PsbF, PsbH, PsbI, PsbJ, PsbK, PsbL, PsbM, PsbT, PsbY, PsbZ, Psb30/Ycf12, at least 3 peripheral proteins of the oxygen-evolving complex and a large number of cofactors. It forms dimeric complexes.

It localises to the plastid. It is found in the chloroplast thylakoid membrane. In terms of biological role, may control the interaction of photosystem II (PSII) cores with the light-harvesting antenna, regulates electron flow through the 2 photosystem reaction centers. PSII is a light-driven water plastoquinone oxidoreductase, using light energy to abstract electrons from H(2)O, generating a proton gradient subsequently used for ATP formation. This chain is Photosystem II reaction center protein Z, found in Liriodendron tulipifera (Tuliptree).